The sequence spans 106 residues: Diptericin A (106 aa).

Residues 1–19 form the signal peptide; the sequence is MQFTIAVALLCCAIASTLA. A propeptide spans 20–23 (removed by a dipeptidylpeptidase); the sequence is YPMP.

This sequence belongs to the attacin/sarcotoxin-2 family.

It localises to the secreted. Antimicrobial peptide required to resist Gram-negative bacterial infections, regulated by Dredd. This chain is Diptericin A, found in Drosophila melanogaster (Fruit fly).